The chain runs to 435 residues: ATP-dependent protease ATPase subunit HslU (435 aa).

ATP contacts are provided by residues isoleucine 18, 60–65, aspartate 248, glutamate 313, and arginine 385; that span reads GVGKTE.

The protein belongs to the ClpX chaperone family. HslU subfamily. As to quaternary structure, a double ring-shaped homohexamer of HslV is capped on each side by a ring-shaped HslU homohexamer. The assembly of the HslU/HslV complex is dependent on binding of ATP.

The protein localises to the cytoplasm. Functionally, ATPase subunit of a proteasome-like degradation complex; this subunit has chaperone activity. The binding of ATP and its subsequent hydrolysis by HslU are essential for unfolding of protein substrates subsequently hydrolyzed by HslV. HslU recognizes the N-terminal part of its protein substrates and unfolds these before they are guided to HslV for hydrolysis. This Rhizobium meliloti (strain 1021) (Ensifer meliloti) protein is ATP-dependent protease ATPase subunit HslU.